Here is a 557-residue protein sequence, read N- to C-terminus: Dihydroxy-acid dehydratase (557 aa).

C47 contributes to the [2Fe-2S] cluster binding site. Residue D79 participates in Mg(2+) binding. Residue C120 coordinates [2Fe-2S] cluster. Mg(2+) is bound by residues D121 and K122. K122 carries the post-translational modification N6-carboxylysine. Position 192 (C192) interacts with [2Fe-2S] cluster. E444 contacts Mg(2+). Residue S470 is the Proton acceptor of the active site.

It belongs to the IlvD/Edd family. In terms of assembly, homodimer. Requires [2Fe-2S] cluster as cofactor. Mg(2+) serves as cofactor.

It carries out the reaction (2R)-2,3-dihydroxy-3-methylbutanoate = 3-methyl-2-oxobutanoate + H2O. It catalyses the reaction (2R,3R)-2,3-dihydroxy-3-methylpentanoate = (S)-3-methyl-2-oxopentanoate + H2O. It functions in the pathway amino-acid biosynthesis; L-isoleucine biosynthesis; L-isoleucine from 2-oxobutanoate: step 3/4. It participates in amino-acid biosynthesis; L-valine biosynthesis; L-valine from pyruvate: step 3/4. Functions in the biosynthesis of branched-chain amino acids. Catalyzes the dehydration of (2R,3R)-2,3-dihydroxy-3-methylpentanoate (2,3-dihydroxy-3-methylvalerate) into 2-oxo-3-methylpentanoate (2-oxo-3-methylvalerate) and of (2R)-2,3-dihydroxy-3-methylbutanoate (2,3-dihydroxyisovalerate) into 2-oxo-3-methylbutanoate (2-oxoisovalerate), the penultimate precursor to L-isoleucine and L-valine, respectively. This Parasynechococcus marenigrum (strain WH8102) protein is Dihydroxy-acid dehydratase.